The chain runs to 167 residues: Putative pre-16S rRNA nuclease (167 aa).

Residues 1-24 form a disordered region; that stretch reads MVLTQHRVPDRPGDPDQDPGRGRR. Over residues 7-21 the composition is skewed to basic and acidic residues; sequence RVPDRPGDPDQDPGR.

This sequence belongs to the YqgF nuclease family.

The protein localises to the cytoplasm. In terms of biological role, could be a nuclease involved in processing of the 5'-end of pre-16S rRNA. The chain is Putative pre-16S rRNA nuclease from Mycolicibacterium paratuberculosis (strain ATCC BAA-968 / K-10) (Mycobacterium paratuberculosis).